The following is a 53-amino-acid chain: Tsetse thrombin inhibitor (53 aa).

Residues 1–21 (MKFFTVLFFLLSIIYLIVAAP) form the signal peptide.

In terms of tissue distribution, expressed at high levels in salivary glands and midguts of adult tsetse flies.

It localises to the secreted. Its function is as follows. Potent and specific inhibitor of human thrombin. It is also a potent inhibitor of thrombin-induced platelet aggregation. It is capable of antagonizing host hemostasis and facilitating blood feeding. In Glossina morsitans morsitans (Savannah tsetse fly), this protein is Tsetse thrombin inhibitor (TTI).